The sequence spans 330 residues: Beta-ketoacyl-[acyl-carrier-protein] synthase III (330 aa).

Active-site residues include Cys-114 and His-257. The interval Gln-258–Arg-262 is ACP-binding. The active site involves Asn-287.

The protein belongs to the thiolase-like superfamily. FabH family. In terms of assembly, homodimer.

The protein resides in the cytoplasm. It carries out the reaction malonyl-[ACP] + acetyl-CoA + H(+) = 3-oxobutanoyl-[ACP] + CO2 + CoA. It participates in lipid metabolism; fatty acid biosynthesis. In terms of biological role, catalyzes the condensation reaction of fatty acid synthesis by the addition to an acyl acceptor of two carbons from malonyl-ACP. Catalyzes the first condensation reaction which initiates fatty acid synthesis and may therefore play a role in governing the total rate of fatty acid production. Possesses both acetoacetyl-ACP synthase and acetyl transacylase activities. Its substrate specificity determines the biosynthesis of branched-chain and/or straight-chain of fatty acids. The polypeptide is Beta-ketoacyl-[acyl-carrier-protein] synthase III (Nitratidesulfovibrio vulgaris (strain ATCC 29579 / DSM 644 / CCUG 34227 / NCIMB 8303 / VKM B-1760 / Hildenborough) (Desulfovibrio vulgaris)).